A 186-amino-acid chain; its full sequence is RIO-type serine/threonine-protein kinase Rio1 (186 aa).

An ATP-binding site is contributed by Lys15. Asp124 (proton acceptor) is an active-site residue. Residues Asn129 and Asp140 each coordinate Mg(2+). Catalysis depends on Asp140, which acts as the 4-aspartylphosphate intermediate.

It belongs to the protein kinase superfamily. RIO-type Ser/Thr kinase family.

The enzyme catalyses L-seryl-[protein] + ATP = O-phospho-L-seryl-[protein] + ADP + H(+). It catalyses the reaction L-threonyl-[protein] + ATP = O-phospho-L-threonyl-[protein] + ADP + H(+). The catalysed reaction is ATP + H2O = ADP + phosphate + H(+). Its function is as follows. Despite the protein kinase domain is proposed to act predominantly as an ATPase. The sequence is that of RIO-type serine/threonine-protein kinase Rio1 (rio1) from Thermoplasma acidophilum (strain ATCC 25905 / DSM 1728 / JCM 9062 / NBRC 15155 / AMRC-C165).